The following is an 80-amino-acid chain: MKDNVHPSYNDVVFHDVTSDFKILTRSTMSSKETVKWEDGQDYPLIKVEISSASHPFYTGKHKVIDTGGRIDKFQKRYAR.

The protein belongs to the bacterial ribosomal protein bL31 family. Type B subfamily. As to quaternary structure, part of the 50S ribosomal subunit.

The sequence is that of Large ribosomal subunit protein bL31B from Xanthomonas campestris pv. campestris (strain 8004).